The sequence spans 94 residues: Small ribosomal subunit protein uS19 (94 aa).

It belongs to the universal ribosomal protein uS19 family.

Functionally, protein S19 forms a complex with S13 that binds strongly to the 16S ribosomal RNA. The sequence is that of Small ribosomal subunit protein uS19 from Finegoldia magna (strain ATCC 29328 / DSM 20472 / WAL 2508) (Peptostreptococcus magnus).